The primary structure comprises 117 residues: Large ribosomal subunit protein bL20 (117 aa).

The protein belongs to the bacterial ribosomal protein bL20 family.

Binds directly to 23S ribosomal RNA and is necessary for the in vitro assembly process of the 50S ribosomal subunit. It is not involved in the protein synthesizing functions of that subunit. This chain is Large ribosomal subunit protein bL20, found in Chromohalobacter salexigens (strain ATCC BAA-138 / DSM 3043 / CIP 106854 / NCIMB 13768 / 1H11).